A 238-amino-acid chain; its full sequence is Purine nucleoside phosphorylase DeoD-type (238 aa).

A purine D-ribonucleoside is bound at residue histidine 4. Residues glycine 20, arginine 24, arginine 43, and arginine 87–serine 90 contribute to the phosphate site. Residues glutamate 179–glutamate 181 and serine 203–aspartate 204 each bind a purine D-ribonucleoside. Aspartate 204 (proton donor) is an active-site residue.

The protein belongs to the PNP/UDP phosphorylase family. In terms of assembly, homohexamer; trimer of homodimers.

The catalysed reaction is a purine D-ribonucleoside + phosphate = a purine nucleobase + alpha-D-ribose 1-phosphate. The enzyme catalyses a purine 2'-deoxy-D-ribonucleoside + phosphate = a purine nucleobase + 2-deoxy-alpha-D-ribose 1-phosphate. In terms of biological role, catalyzes the reversible phosphorolytic breakdown of the N-glycosidic bond in the beta-(deoxy)ribonucleoside molecules, with the formation of the corresponding free purine bases and pentose-1-phosphate. This Actinobacillus succinogenes (strain ATCC 55618 / DSM 22257 / CCUG 43843 / 130Z) protein is Purine nucleoside phosphorylase DeoD-type.